A 431-amino-acid chain; its full sequence is Enolase (431 aa).

Residue Q166 participates in (2R)-2-phosphoglycerate binding. The active-site Proton donor is the E208. Mg(2+) is bound by residues D245, E288, and D315. 4 residues coordinate (2R)-2-phosphoglycerate: K340, R369, S370, and K391. The active-site Proton acceptor is the K340.

The protein belongs to the enolase family. Mg(2+) is required as a cofactor.

It localises to the cytoplasm. The protein localises to the secreted. It is found in the cell surface. The catalysed reaction is (2R)-2-phosphoglycerate = phosphoenolpyruvate + H2O. It participates in carbohydrate degradation; glycolysis; pyruvate from D-glyceraldehyde 3-phosphate: step 4/5. Catalyzes the reversible conversion of 2-phosphoglycerate (2-PG) into phosphoenolpyruvate (PEP). It is essential for the degradation of carbohydrates via glycolysis. In Clostridium botulinum (strain Eklund 17B / Type B), this protein is Enolase.